Reading from the N-terminus, the 408-residue chain is Putative glutamate--cysteine ligase 2 (408 aa).

Belongs to the glutamate--cysteine ligase type 2 family. YbdK subfamily.

The catalysed reaction is L-cysteine + L-glutamate + ATP = gamma-L-glutamyl-L-cysteine + ADP + phosphate + H(+). Its function is as follows. ATP-dependent carboxylate-amine ligase which exhibits weak glutamate--cysteine ligase activity. This Bradyrhizobium sp. (strain BTAi1 / ATCC BAA-1182) protein is Putative glutamate--cysteine ligase 2.